We begin with the raw amino-acid sequence, 340 residues long: Ketol-acid reductoisomerase (NADP(+)) (340 aa).

The 180-residue stretch at 3-182 (VQMEYEKDVK…GAARVGLLET (180 aa)) folds into the KARI N-terminal Rossmann domain. NADP(+) contacts are provided by residues 26–29 (YGSQ), arginine 49, serine 53, and 83–86 (DEIQ). Histidine 108 is a catalytic residue. Glycine 134 is an NADP(+) binding site. One can recognise a KARI C-terminal knotted domain in the interval 183 to 328 (TYKEETEEDL…AELRKAMPFV (146 aa)). Positions 191, 195, 227, and 231 each coordinate Mg(2+). Serine 252 contributes to the substrate binding site.

The protein belongs to the ketol-acid reductoisomerase family. Mg(2+) is required as a cofactor.

It catalyses the reaction (2R)-2,3-dihydroxy-3-methylbutanoate + NADP(+) = (2S)-2-acetolactate + NADPH + H(+). The enzyme catalyses (2R,3R)-2,3-dihydroxy-3-methylpentanoate + NADP(+) = (S)-2-ethyl-2-hydroxy-3-oxobutanoate + NADPH + H(+). Its pathway is amino-acid biosynthesis; L-isoleucine biosynthesis; L-isoleucine from 2-oxobutanoate: step 2/4. It participates in amino-acid biosynthesis; L-valine biosynthesis; L-valine from pyruvate: step 2/4. Functionally, involved in the biosynthesis of branched-chain amino acids (BCAA). Catalyzes an alkyl-migration followed by a ketol-acid reduction of (S)-2-acetolactate (S2AL) to yield (R)-2,3-dihydroxy-isovalerate. In the isomerase reaction, S2AL is rearranged via a Mg-dependent methyl migration to produce 3-hydroxy-3-methyl-2-ketobutyrate (HMKB). In the reductase reaction, this 2-ketoacid undergoes a metal-dependent reduction by NADPH to yield (R)-2,3-dihydroxy-isovalerate. The protein is Ketol-acid reductoisomerase (NADP(+)) of Streptococcus pneumoniae (strain CGSP14).